A 392-amino-acid chain; its full sequence is Putative cystathionine gamma-lyase 2 (392 aa).

The tract at residues 32–55 (LSSTYKQDNPGEPKGHDYSRAGNP) is disordered. The span at 40 to 50 (NPGEPKGHDYS) shows a compositional bias: basic and acidic residues. Substrate-binding residues include R51, Y103, and R108. Position 203 is an N6-(pyridoxal phosphate)lysine (K203). E330 serves as a coordination point for substrate.

Belongs to the trans-sulfuration enzymes family. Pyridoxal 5'-phosphate serves as cofactor.

Its subcellular location is the cytoplasm. It catalyses the reaction L,L-cystathionine + H2O = 2-oxobutanoate + L-cysteine + NH4(+). It participates in amino-acid biosynthesis; L-cysteine biosynthesis; L-cysteine from L-homocysteine and L-serine: step 2/2. The protein is Putative cystathionine gamma-lyase 2 (cth-2) of Caenorhabditis elegans.